The primary structure comprises 156 residues: Transcription elongation factor GreA (156 aa).

Positions tyrosine 12–alanine 72 form a coiled coil.

This sequence belongs to the GreA/GreB family.

Necessary for efficient RNA polymerase transcription elongation past template-encoded arresting sites. The arresting sites in DNA have the property of trapping a certain fraction of elongating RNA polymerases that pass through, resulting in locked ternary complexes. Cleavage of the nascent transcript by cleavage factors such as GreA or GreB allows the resumption of elongation from the new 3'terminus. GreA releases sequences of 2 to 3 nucleotides. This Dehalococcoides mccartyi (strain ATCC BAA-2266 / KCTC 15142 / 195) (Dehalococcoides ethenogenes (strain 195)) protein is Transcription elongation factor GreA.